A 329-amino-acid chain; its full sequence is Ribosomal protein L11 methyltransferase (329 aa).

Positions 177, 198, 220, and 264 each coordinate S-adenosyl-L-methionine.

This sequence belongs to the methyltransferase superfamily. PrmA family.

It localises to the cytoplasm. It catalyses the reaction L-lysyl-[protein] + 3 S-adenosyl-L-methionine = N(6),N(6),N(6)-trimethyl-L-lysyl-[protein] + 3 S-adenosyl-L-homocysteine + 3 H(+). Methylates ribosomal protein L11. The sequence is that of Ribosomal protein L11 methyltransferase from Helicobacter pylori (strain Shi470).